The primary structure comprises 536 residues: Putative ATP-dependent RNA helicase L364 (536 aa).

In terms of domain architecture, Helicase ATP-binding spans 47–214; sequence ISILLKYFLV…IPFYLMNFIP (168 aa). Position 60–67 (60–67) interacts with ATP; sequence SDTGVGKT. The DEAH box motif lies at 160–163; the sequence is DESH. Positions 288 to 334 form a coiled coil; that stretch reads LSDDSDKIAEAYEEIAELMRELEEKKTQCKNHLAKIQKLKQEIELRK. Residues 338–486 enclose the Helicase C-terminal domain; sequence FIEQTQLYLE…ISAINDGDLE (149 aa). The interval 502 to 536 is disordered; the sequence is VLNEPVNNPIEEPVNDPVKDPVEDLTDNQPNIVEV.

This sequence belongs to the DEAD box helicase family. DEAH subfamily.

It carries out the reaction ATP + H2O = ADP + phosphate + H(+). The chain is Putative ATP-dependent RNA helicase L364 from Acanthamoeba polyphaga (Amoeba).